Consider the following 114-residue polypeptide: Protein ORF3 (114 aa).

Hydrophobic regions lie at residues 6-22 (CDLGLFCCCSSCFCLCC) and 33-53 (AVVGGAAAVPAVVSGVTGLIL). The interval 28–68 (VSRLAAVVGGAAAVPAVVSGVTGLILSPSQSPIFIQPTPSP) is interaction with host HPX. Positions 48 to 72 (VTGLILSPSQSPIFIQPTPSPPMSP) are interaction with the capsid protein. Ser71 carries the phosphoserine; by host modification. The homodimerization, and interaction with host AMBP/bikunin stretch occupies residues 72 to 114 (PLRPGLDLVFANQPDHSAPLGVTRPSAPPLPHVVDLPQLGPRR). A disordered region spans residues 91-114 (LGVTRPSAPPLPHVVDLPQLGPRR). Positions 95–104 (RPSAPPLPHV) are interaction with host SRC, HCK, FYN, PIK3R3 and GRB2. Residues 96–99 (PSAP) carry the PTAP/PSAP motif motif.

The protein belongs to the hepevirus ORF3 protein family. As to quaternary structure, forms homooligomers. Interacts with host SRC, HCK, FYN, PIK3R3 and GRB2 (via SH3 domain); binding does not activate the kinases. Interacts with host AMBP/bikunin and AMBP/alpha-1-microglobulin peptides. Interacts with host HPX/hemopexin. Interacts (when phosphorylated) with capsid protein ORF2. Interacts with host TSG101; this interaction plays a role in viral release from the host cell. Interacts with host SIRPA; this interaction down-regulates the phosphorylation of host IRF3. Post-translationally, palmitoylated in the N-terminus.

It localises to the host endoplasmic reticulum membrane. It is found in the host cytoplasm. Its subcellular location is the host cytoskeleton. The protein resides in the virion. The protein localises to the host cell membrane. Its function is as follows. Small multifunctional phosphoprotein involved in virion morphogenesis, egress and counteracting host innate immunity. Plays critical roles in the final steps of viral release by interacting with host TSG101, a member of the vacuolar protein-sorting pathway and using other cellular host proteins involved in vesicle formation pathway. Also acts as a viroporin and forms ion conductive pores allowing viral particle release. Impairs the generation of type I interferon by down-regulating host TLR3 and TLR7 as well as their downstream signaling pathways. Down-regulates the phosphorylation of host IRF3 via the interaction with host SIRP-alpha, thereby inhibiting IFN-I expression. Interacts with host microtubules. The protein is Protein ORF3 of Homo sapiens (Human).